The following is a 321-amino-acid chain: Acetyl-coenzyme A carboxylase carboxyl transferase subunit alpha (321 aa).

One can recognise a CoA carboxyltransferase C-terminal domain in the interval 39–293 (KLEEKSRKLT…KTELKRNLEE (255 aa)).

It belongs to the AccA family. In terms of assembly, acetyl-CoA carboxylase is a heterohexamer composed of biotin carboxyl carrier protein (AccB), biotin carboxylase (AccC) and two subunits each of ACCase subunit alpha (AccA) and ACCase subunit beta (AccD).

The protein resides in the cytoplasm. The catalysed reaction is N(6)-carboxybiotinyl-L-lysyl-[protein] + acetyl-CoA = N(6)-biotinyl-L-lysyl-[protein] + malonyl-CoA. It participates in lipid metabolism; malonyl-CoA biosynthesis; malonyl-CoA from acetyl-CoA: step 1/1. Component of the acetyl coenzyme A carboxylase (ACC) complex. First, biotin carboxylase catalyzes the carboxylation of biotin on its carrier protein (BCCP) and then the CO(2) group is transferred by the carboxyltransferase to acetyl-CoA to form malonyl-CoA. The protein is Acetyl-coenzyme A carboxylase carboxyl transferase subunit alpha of Methylococcus capsulatus (strain ATCC 33009 / NCIMB 11132 / Bath).